The primary structure comprises 129 residues: uncharacterized protein (129 aa).

Residues 52 to 94 (NGDEESQDDWLNDLLKSDGDGGKAGPVDPSHPMETTTTDHSSQ) are disordered. Over residues 53–62 (GDEESQDDWL) the composition is skewed to acidic residues. The span at 84–94 (METTTTDHSSQ) shows a compositional bias: polar residues.

This is an uncharacterized protein from Caenorhabditis elegans.